A 325-amino-acid chain; its full sequence is uncharacterized protein (325 aa).

A disordered region spans residues 296–325 (QRTLSSSMEEADRPRRMSVTQPHLPPVPSA).

Belongs to the NDRG family.

This is an uncharacterized protein from Caenorhabditis elegans.